A 985-amino-acid polypeptide reads, in one-letter code: Thioredoxin domain-containing protein 11 (985 aa).

Over residues 1-11 (MSECGGRGGGS) the composition is skewed to gly residues. Residues 1-38 (MSECGGRGGGSSSSEDAEDEGGGGGGPAGSDCLSSSPT) are disordered. The span at 29 to 38 (GSDCLSSSPT) shows a compositional bias: low complexity. Residues 65–85 (LLCGAVALGCALLLALKFTCS) form a helical membrane-spanning segment. The Thioredoxin 1 domain occupies 92–214 (IPAKPPVSFF…IEKFVRRVMK (123 aa)). 2 disulfides stabilise this stretch: Cys-469-Cys-472 and Cys-719-Cys-722. Residues 649-799 (LDPKQALMKL…LLRFILHHSD (151 aa)) enclose the Thioredoxin 2 domain. A coiled-coil region spans residues 821 to 919 (VLQRGHISHL…ASENLLTENT (99 aa)). Ser-828 is subject to Phosphoserine. Residues 935–985 (RDGAESLAAQREVHPKQPEPSATPQLPGSSPPPANVSATLVSERNKENRTD) are disordered.

The protein belongs to the protein disulfide isomerase family. Interacts with the cytoplasmic part of DUOX1 and DUOX2. Interacts with TPO and CYBA. As to expression, widely expressed at low level. Expressed at higher level in thyroid and prostate.

Its subcellular location is the endoplasmic reticulum membrane. May act as a redox regulator involved in DUOX proteins folding. The interaction with DUOX1 and DUOX2 suggest that it belongs to a multiprotein complex constituting the thyroid H(2)O(2) generating system. It is however not sufficient to assist DUOX1 and DUOX2 in H(2)O(2) generation. The chain is Thioredoxin domain-containing protein 11 (TXNDC11) from Homo sapiens (Human).